Reading from the N-terminus, the 209-residue chain is Transmembrane protein 52 (209 aa).

Positions 1–32 (MARGPLAARGLRLLLPLLPLLPLLPLPQVALG) are cleaved as a signal peptide. A helical membrane pass occupies residues 56–76 (VGLILLAVLLLLLCGVTAGCV). The segment at 145 to 209 (AYSLYTPEPP…QLPPCSPGAP (65 aa)) is disordered. Over residues 159–170 (EAVKMAKPREEG) the composition is skewed to basic and acidic residues. The span at 186–202 (LETTPVPQESGPNTQLP) shows a compositional bias: polar residues.

The protein resides in the membrane. The protein is Transmembrane protein 52 (TMEM52) of Homo sapiens (Human).